A 382-amino-acid polypeptide reads, in one-letter code: uncharacterized protein (382 aa).

12 helical membrane passes run 14–34 (GLLLLTLAIAVLNTLVPLWLA), 45–65 (VVSSSYFTGNLVGTLLTGYVI), 79–99 (FIFAAGCAGLGLMIGFWSWLA), 102–122 (FVAGIGCAMIWVVVESALMCS), 131–151 (LLAAYMMVYYVGTFLGQLLVS), 157–177 (LMSVLPWVTGLTLAGILPLLF), 204–224 (LGVNGCIISGIVLGSLYGLMP), 235–255 (ASIGFWMAVLVSAGILGQWPI), 270–290 (VQVFVVILGSIAMLSQAAMAP), 291–311 (ALFILGAAGFTLYPVAMAWAC), 325–345 (ALLLSYTVGSLLGPSFTAMLM), and 348–368 (FSDNLLFIMIASVSFIYLLML).

This sequence belongs to the major facilitator superfamily. YcaD (TC 2.A.1.26) family.

Its subcellular location is the cell inner membrane. This is an uncharacterized protein from Escherichia coli O45:K1 (strain S88 / ExPEC).